The following is a 479-amino-acid chain: Replication factor C large subunit (479 aa).

56-63 (GPPGVGKT) contributes to the ATP binding site. Basic and acidic residues predominate over residues 435–461 (LGEKPLEPQEAKARRRGEKASRDEGRK). The tract at residues 435–479 (LGEKPLEPQEAKARRRGEKASRDEGRKAGKRERKGVGLDFFLGEQ) is disordered.

It belongs to the activator 1 small subunits family. RfcL subfamily. As to quaternary structure, heteromultimer composed of small subunits (RfcS) and large subunits (RfcL).

Part of the RFC clamp loader complex which loads the PCNA sliding clamp onto DNA. The sequence is that of Replication factor C large subunit from Aeropyrum pernix (strain ATCC 700893 / DSM 11879 / JCM 9820 / NBRC 100138 / K1).